We begin with the raw amino-acid sequence, 118 residues long: MARIAGVNIPDNKHTVISLTYIYGVGRTTAQKICAETGVNPAAKIKDLSDEQIEQLRGEVAKFTTEGDLRREINMKIKRLMDLGCYRGLRHRRGLPVRGQRTKTNARTRKGPRKPIRK.

The disordered stretch occupies residues 93–118; the sequence is RGLPVRGQRTKTNARTRKGPRKPIRK.

It belongs to the universal ribosomal protein uS13 family. In terms of assembly, part of the 30S ribosomal subunit. Forms a loose heterodimer with protein S19. Forms two bridges to the 50S subunit in the 70S ribosome.

Functionally, located at the top of the head of the 30S subunit, it contacts several helices of the 16S rRNA. In the 70S ribosome it contacts the 23S rRNA (bridge B1a) and protein L5 of the 50S subunit (bridge B1b), connecting the 2 subunits; these bridges are implicated in subunit movement. Contacts the tRNAs in the A and P-sites. This is Small ribosomal subunit protein uS13 from Pseudomonas fluorescens (strain Pf0-1).